A 444-amino-acid polypeptide reads, in one-letter code: ATP-dependent protease ATPase subunit HslU (444 aa).

ATP-binding positions include V18, 60–65, D258, E323, and R395; that span reads GVGKTE.

This sequence belongs to the ClpX chaperone family. HslU subfamily. As to quaternary structure, a double ring-shaped homohexamer of HslV is capped on each side by a ring-shaped HslU homohexamer. The assembly of the HslU/HslV complex is dependent on binding of ATP.

It is found in the cytoplasm. In terms of biological role, ATPase subunit of a proteasome-like degradation complex; this subunit has chaperone activity. The binding of ATP and its subsequent hydrolysis by HslU are essential for unfolding of protein substrates subsequently hydrolyzed by HslV. HslU recognizes the N-terminal part of its protein substrates and unfolds these before they are guided to HslV for hydrolysis. This Thioalkalivibrio sulfidiphilus (strain HL-EbGR7) protein is ATP-dependent protease ATPase subunit HslU.